A 77-amino-acid chain; its full sequence is Cysteine-rich protein 1 (77 aa).

Positions 2-63 (PKCPKCDKEV…HPCYSAMFGP (62 aa)) constitute an LIM zinc-binding domain. Residues Lys-9 and Lys-22 each carry the N6-acetyllysine modification. Arg-68 is subject to Omega-N-methylarginine.

Seems to have a role in zinc absorption and may function as an intracellular zinc transport protein. The protein is Cysteine-rich protein 1 (Crip1) of Mus musculus (Mouse).